A 129-amino-acid chain; its full sequence is Small ribosomal subunit protein bS16m (129 aa).

It belongs to the bacterial ribosomal protein bS16 family. In terms of assembly, component of the mitochondrial ribosome small subunit (28S) which comprises a 12S rRNA and about 30 distinct proteins.

It localises to the mitochondrion. This Drosophila melanogaster (Fruit fly) protein is Small ribosomal subunit protein bS16m (mRpS16).